Reading from the N-terminus, the 186-residue chain is ATP synthase subunit b (186 aa).

A helical membrane pass occupies residues 28 to 48 (IVWSIIPFAVILFVFWKFVLP).

It belongs to the ATPase B chain family. In terms of assembly, F-type ATPases have 2 components, F(1) - the catalytic core - and F(0) - the membrane proton channel. F(1) has five subunits: alpha(3), beta(3), gamma(1), delta(1), epsilon(1). F(0) has three main subunits: a(1), b(2) and c(10-14). The alpha and beta chains form an alternating ring which encloses part of the gamma chain. F(1) is attached to F(0) by a central stalk formed by the gamma and epsilon chains, while a peripheral stalk is formed by the delta and b chains.

It localises to the cell membrane. In terms of biological role, f(1)F(0) ATP synthase produces ATP from ADP in the presence of a proton or sodium gradient. F-type ATPases consist of two structural domains, F(1) containing the extramembraneous catalytic core and F(0) containing the membrane proton channel, linked together by a central stalk and a peripheral stalk. During catalysis, ATP synthesis in the catalytic domain of F(1) is coupled via a rotary mechanism of the central stalk subunits to proton translocation. Its function is as follows. Component of the F(0) channel, it forms part of the peripheral stalk, linking F(1) to F(0). This Corynebacterium jeikeium (strain K411) protein is ATP synthase subunit b.